We begin with the raw amino-acid sequence, 300 residues long: Zinc finger CCCH-type antiviral protein 1-like (300 aa).

At A2 the chain carries N-acetylalanine. The segment covering 252–263 (NTDNSSPSTEHS) has biased composition (polar residues). The segment at 252 to 300 (NTDNSSPSTEHSQGLEKQGVHAAGAAEAGPLASVPAQSAKKPCPVSCEK) is disordered. Residues 271-283 (VHAAGAAEAGPLA) show a composition bias toward low complexity.

The polypeptide is Zinc finger CCCH-type antiviral protein 1-like (ZC3HAV1L) (Homo sapiens (Human)).